We begin with the raw amino-acid sequence, 182 residues long: Translation initiation factor IF-3 (182 aa).

It belongs to the IF-3 family. As to quaternary structure, monomer.

It is found in the cytoplasm. Functionally, IF-3 binds to the 30S ribosomal subunit and shifts the equilibrium between 70S ribosomes and their 50S and 30S subunits in favor of the free subunits, thus enhancing the availability of 30S subunits on which protein synthesis initiation begins. In Endomicrobium trichonymphae, this protein is Translation initiation factor IF-3.